Reading from the N-terminus, the 139-residue chain is Proline-rich nuclear receptor coactivator 2 (139 aa).

Disordered regions lie at residues 1 to 51 (MGGG…GYNS), 61 to 80 (NGGK…SLSG), and 89 to 110 (ANQN…LPKP). Polar residues-rich tracts occupy residues 11–36 (APQS…NSQM) and 61–79 (NGGK…SSLS). The SH3-binding motif lies at 99–105 (SEPPSPS). Positions 101 to 110 (PPSPSVLPKP) are enriched in pro residues.

This sequence belongs to the PNRC family. PNRC2 subfamily. Interacts with UPF1/RENT1; preferentially interacts with hyperphosphorylated form. Interacts with DCP1A. Interacts with many nuclear receptors including ESR1, ESRRA, ESRRG, NR3C1/GR, NR5A1, PGR, TR, RAR and RXR. In terms of tissue distribution, expressed in heart, lung, muscle and brain.

It is found in the nucleus. The protein resides in the cytoplasm. The protein localises to the P-body. Functionally, involved in nonsense-mediated mRNA decay (NMD) by acting as a bridge between the mRNA decapping complex and the NMD machinery. May act by targeting the NMD machinery to the P-body and recruiting the decapping machinery to aberrant mRNAs. Required for UPF1/RENT1 localization to the P-body. Plays a role in glucocorticoid receptor-mediated mRNA degradation by interacting with the glucocorticoid receptor NR3C1 in a ligand-dependent manner when it is bound to the 5' UTR of target mRNAs and recruiting the RNA helicase UPF1 and the mRNA-decapping enzyme DCP1A, leading to RNA decay. Also acts as a nuclear receptor coactivator. May play a role in controlling the energy balance between energy storage and energy expenditure. The sequence is that of Proline-rich nuclear receptor coactivator 2 (PNRC2) from Homo sapiens (Human).